A 393-amino-acid chain; its full sequence is S-adenosylmethionine synthase 1 (393 aa).

E9 serves as a coordination point for Mg(2+). H15 contributes to the ATP binding site. E43 lines the K(+) pocket. 2 residues coordinate L-methionine: E56 and Q99. Residues 167–169 (DGK), 235–238 (SGRF), D246, 252–253 (RK), A269, K273, and K277 each bind ATP. D246 is an L-methionine binding site. K277 provides a ligand contact to L-methionine.

This sequence belongs to the AdoMet synthase family. In terms of assembly, homotetramer. Mn(2+) is required as a cofactor. The cofactor is Mg(2+). Requires Co(2+) as cofactor. K(+) serves as cofactor. As to expression, mostly expressed in stems.

The protein localises to the cytoplasm. It carries out the reaction L-methionine + ATP + H2O = S-adenosyl-L-methionine + phosphate + diphosphate. The protein operates within amino-acid biosynthesis; S-adenosyl-L-methionine biosynthesis; S-adenosyl-L-methionine from L-methionine: step 1/1. Catalyzes the formation of S-adenosylmethionine from methionine and ATP. The reaction comprises two steps that are both catalyzed by the same enzyme: formation of S-adenosylmethionine (AdoMet) and triphosphate, and subsequent hydrolysis of the triphosphate. The protein is S-adenosylmethionine synthase 1 (SAM1) of Solanum lycopersicum (Tomato).